The chain runs to 462 residues: Sugar transporter ERD6-like 12 (462 aa).

Transmembrane regions (helical) follow at residues 25–45 (LLIF…AAIG), 62–82 (LAQF…GAIF), 101–121 (LFCI…WLDM), 124–144 (FLVG…IAEI), 151–171 (GAFT…VYYF), 179–199 (TLAI…FFIP), 262–282 (LTIG…GISS), 297–317 (IGMM…LILV), 326–346 (LMTS…AFGV), 358–378 (IFCF…MGAL), 399–419 (VTIA…FMLV), and 424–444 (GTFI…WCLV).

The protein belongs to the major facilitator superfamily. Sugar transporter (TC 2.A.1.1) family.

The protein resides in the membrane. In terms of biological role, sugar transporter. In Arabidopsis thaliana (Mouse-ear cress), this protein is Sugar transporter ERD6-like 12 (SUGTL5).